The following is a 465-amino-acid chain: Cyclin-A1 (465 aa).

It belongs to the cyclin family. Cyclin AB subfamily. Interacts with the CDK2 and the CDC2 protein kinases to form a serine/threonine kinase holoenzyme complex. The cyclin subunit imparts substrate specificity to the complex. Does not bind CDK4 and CDK5 (in vitro). The cyclin A1-CDK2 complex interacts with transcription factor E2F-1 and RB proteins. Found in a complex with CDK2, CABLES1 and CCNE1. Interacts with INCA1. Interacts with KLHDC9. Post-translationally, polyubiquitinated via 'Lys-11'-linked ubiquitin by the anaphase-promoting complex (APC/C), leading to its degradation by the proteasome. Deubiquitinated and stabilized by USP37 enables entry into S phase. Ubiquitinated during the G1 phase by the SCF(FBXO31) complex, leading to its proteasomal degradation. Very high levels in testis and very low levels in brain. Also found in myeloid leukemia cell lines.

The protein localises to the nucleus. Its function is as follows. May be involved in the control of the cell cycle at the G1/S (start) and G2/M (mitosis) transitions. May primarily function in the control of the germline meiotic cell cycle and additionally in the control of mitotic cell cycle in some somatic cells. The chain is Cyclin-A1 (CCNA1) from Homo sapiens (Human).